We begin with the raw amino-acid sequence, 179 residues long: Centromere protein R (179 aa).

The disordered stretch occupies residues 1–79; sequence MSAKRSLKLD…RLSRRGQPQT (79 aa). Residues 30–50 show a composition bias toward polar residues; it reads NSYSPTTGTCQISPFSSPTSH. Residues 51–64 are compositionally biased toward basic and acidic residues; sequence NAEDLRNGLSHGDE. The short motif at 172 to 176 is the LXXLL motif element; sequence LQLLL.

It localises to the nucleus. Its subcellular location is the chromosome. It is found in the centromere. The protein localises to the kinetochore. Functionally, transcription coregulator that can have both coactivator and corepressor functions. Involved in the coactivation of nuclear receptors for retinoid X (RXRs) and thyroid hormone (TRs) in a ligand-dependent fashion. Probable component of a centromeric complex involved in assembly of kinetochore proteins, mitotic progression and chromosome segregation. This Gallus gallus (Chicken) protein is Centromere protein R (CENPR).